The following is a 369-amino-acid chain: GTPase Obg (369 aa).

Residues 1-159 enclose the Obg domain; it reads MKFIDEAKIE…RELRLELKVL (159 aa). The disordered stretch occupies residues 128-148; sequence IHFKSSTNRAPRQKSEGKEGE. In terms of domain architecture, OBG-type G spans 160–333; it reads ADIGLLGMPN…LVTEIYDYIA (174 aa). Residues 166 to 173, 191 to 195, 213 to 216, 283 to 286, and 314 to 316 each bind GTP; these read GMPNAGKS, FTTLH, DIPG, NKLD, and SAL. Mg(2+) contacts are provided by serine 173 and threonine 193.

It belongs to the TRAFAC class OBG-HflX-like GTPase superfamily. OBG GTPase family. As to quaternary structure, monomer. Requires Mg(2+) as cofactor.

The protein localises to the cytoplasm. In terms of biological role, an essential GTPase which binds GTP, GDP and possibly (p)ppGpp with moderate affinity, with high nucleotide exchange rates and a fairly low GTP hydrolysis rate. Plays a role in control of the cell cycle, stress response, ribosome biogenesis and in those bacteria that undergo differentiation, in morphogenesis control. In Herminiimonas arsenicoxydans, this protein is GTPase Obg.